A 534-amino-acid chain; its full sequence is NAD(P)H-quinone oxidoreductase chain 4 2 (534 aa).

13 helical membrane passes run 6–26 (FPWL…IPLL), 38–58 (WYSL…FWTS), 93–113 (LILL…PVTF), 117–137 (FFYF…AVQD), 138–158 (LLVF…LLAI), 171–191 (FILY…AMAF), 210–230 (IGFQ…KLPI), 245–265 (TAPV…YALF), 279–299 (FAPI…LTSF), 313–333 (ISHM…GLSG), 335–355 (MLQM…VGAT), 377–399 (MFAM…GFVA), and 419–439 (VVVI…LLSM).

The protein belongs to the complex I subunit 4 family.

The protein resides in the cellular thylakoid membrane. The enzyme catalyses a plastoquinone + NADH + (n+1) H(+)(in) = a plastoquinol + NAD(+) + n H(+)(out). It catalyses the reaction a plastoquinone + NADPH + (n+1) H(+)(in) = a plastoquinol + NADP(+) + n H(+)(out). NDH-1 shuttles electrons from NAD(P)H, via FMN and iron-sulfur (Fe-S) centers, to quinones in the respiratory chain. The immediate electron acceptor for the enzyme in this species is believed to be plastoquinone. Couples the redox reaction to proton translocation (for every two electrons transferred, four hydrogen ions are translocated across the cytoplasmic membrane), and thus conserves the redox energy in a proton gradient. The chain is NAD(P)H-quinone oxidoreductase chain 4 2 from Synechococcus elongatus (strain ATCC 33912 / PCC 7942 / FACHB-805) (Anacystis nidulans R2).